The primary structure comprises 325 residues: Large ribosomal subunit protein uL1m (325 aa).

A mitochondrion-targeting transit peptide spans 1–50 (MAATVRCFGRVLIHHQRCSLATVTSQTSLYPCCIYVPVPNRHFAAAAKPA). Positions 47–66 (AKPAKKTKKGTKEKASNEKK) are disordered. Over residues 56–66 (GTKEKASNEKK) the composition is skewed to basic and acidic residues.

It belongs to the universal ribosomal protein uL1 family.

The protein resides in the mitochondrion. The chain is Large ribosomal subunit protein uL1m (MRPL1) from Bos taurus (Bovine).